The primary structure comprises 370 residues: Calcium/calmodulin-dependent protein kinase type 1 (370 aa).

The 257-residue stretch at 20-276 folds into the Protein kinase domain; it reads YDFRDVLGTG…CEQALQHPWI (257 aa). Residues 26-34 and K49 each bind ATP; that span reads LGTGAFSEV. K59 participates in a covalent cross-link: Glycyl lysine isopeptide (Lys-Gly) (interchain with G-Cter in ubiquitin). Catalysis depends on D141, which acts as the Proton acceptor. At T177 the chain carries Phosphothreonine; by CaMKK1 and CaMKK2. The autoinhibitory domain stretch occupies residues 276–316; it reads IAGDTALDKNIHQSVSEQIKKNFAKSKWKQAFNATAVVRHM. Residues 296–317 are calmodulin-binding; the sequence is KNFAKSKWKQAFNATAVVRHMR. Residues 315–321 carry the Nuclear export signal motif; the sequence is HMRKLQL. A Phosphoserine modification is found at S363.

The protein belongs to the protein kinase superfamily. CAMK Ser/Thr protein kinase family. CaMK subfamily. In terms of assembly, monomer. Interacts with XPO1. Interacts with MARK2, ARHGEF7/BETAPIX and GIT1. Phosphorylated by CaMKK1 and CaMKK2 on Thr-177. In terms of processing, polybiquitinated by the E3 ubiquitin-protein ligase complex SCF(FBXL12), leading to proteasomal degradation. As to expression, widely expressed. Expressed in cells of the zona glomerulosa of the adrenal cortex.

It localises to the cytoplasm. Its subcellular location is the nucleus. The catalysed reaction is L-seryl-[protein] + ATP = O-phospho-L-seryl-[protein] + ADP + H(+). It catalyses the reaction L-threonyl-[protein] + ATP = O-phospho-L-threonyl-[protein] + ADP + H(+). Activated by Ca(2+)/calmodulin. Binding of calmodulin results in conformational change that relieves intrasteric autoinhibition and allows phosphorylation of Thr-177 within the activation loop by CaMKK1 or CaMKK2. Phosphorylation of Thr-177 results in several fold increase in total activity. Unlike CaMK4, is unable to exhibit autonomous activity after Ca(2+)/calmodulin activation. Functionally, calcium/calmodulin-dependent protein kinase that operates in the calcium-triggered CaMKK-CaMK1 signaling cascade and, upon calcium influx, regulates transcription activators activity, cell cycle, hormone production, cell differentiation, actin filament organization and neurite outgrowth. Recognizes the substrate consensus sequence [MVLIF]-x-R-x(2)-[ST]-x(3)-[MVLIF]. Regulates axonal extension and growth cone motility in hippocampal and cerebellar nerve cells. Upon NMDA receptor-mediated Ca(2+) elevation, promotes dendritic growth in hippocampal neurons and is essential in synapses for full long-term potentiation (LTP) and ERK2-dependent translational activation. Downstream of NMDA receptors, promotes the formation of spines and synapses in hippocampal neurons by phosphorylating ARHGEF7/BETAPIX on 'Ser-694', which results in the enhancement of ARHGEF7 activity and activation of RAC1. Promotes neuronal differentiation and neurite outgrowth by activation and phosphorylation of MARK2 on 'Ser-91', 'Ser-92', 'Ser-93' and 'Ser-294'. Promotes nuclear export of HDAC5 and binding to 14-3-3 by phosphorylation of 'Ser-259' and 'Ser-498' in the regulation of muscle cell differentiation. Regulates NUMB-mediated endocytosis by phosphorylation of NUMB on 'Ser-276' and 'Ser-295'. Involved in the regulation of basal and estrogen-stimulated migration of medulloblastoma cells through ARHGEF7/BETAPIX phosphorylation. Is required for proper activation of cyclin-D1/CDK4 complex during G1 progression in diploid fibroblasts. Plays a role in K(+) and ANG2-mediated regulation of the aldosterone synthase (CYP11B2) to produce aldosterone in the adrenal cortex. Phosphorylates EIF4G3/eIF4GII. In vitro phosphorylates CREB1, ATF1, CFTR, MYL9 and SYN1/synapsin I. The protein is Calcium/calmodulin-dependent protein kinase type 1 (CAMK1) of Homo sapiens (Human).